We begin with the raw amino-acid sequence, 244 residues long: Protein-L-isoaspartate O-methyltransferase (244 aa).

The segment at Met-1–Glu-39 is disordered. Ser-92 is a catalytic residue.

The protein belongs to the methyltransferase superfamily. L-isoaspartyl/D-aspartyl protein methyltransferase family.

The protein resides in the cytoplasm. It carries out the reaction [protein]-L-isoaspartate + S-adenosyl-L-methionine = [protein]-L-isoaspartate alpha-methyl ester + S-adenosyl-L-homocysteine. Functionally, catalyzes the methyl esterification of L-isoaspartyl residues in peptides and proteins that result from spontaneous decomposition of normal L-aspartyl and L-asparaginyl residues. It plays a role in the repair and/or degradation of damaged proteins. The chain is Protein-L-isoaspartate O-methyltransferase from Synechococcus sp. (strain JA-2-3B'a(2-13)) (Cyanobacteria bacterium Yellowstone B-Prime).